The sequence spans 228 residues: Cytochrome c oxidase subunit 2 (228 aa).

Topologically, residues 1–26 (MATWANLGLQNSSSPLMEQLNFFHDH) are mitochondrial intermembrane. The chain crosses the membrane as a helical span at residues 27–48 (TLLILIMITVMIAYIMFMLFFN). The Mitochondrial matrix segment spans residues 49-62 (KFTNRYLLHGQTIE). The helical transmembrane segment at 63–82 (IIWTILPAIILMFIAFPSLR) threads the bilayer. Topologically, residues 83-228 (LLYLMDEINS…FIKWISSQMN (146 aa)) are mitochondrial intermembrane. Cu cation contacts are provided by histidine 161, cysteine 196, glutamate 198, cysteine 200, histidine 204, and methionine 207. Residue glutamate 198 participates in Mg(2+) binding.

It belongs to the cytochrome c oxidase subunit 2 family. Component of the cytochrome c oxidase (complex IV, CIV), a multisubunit enzyme composed of a catalytic core of 3 subunits and several supernumerary subunits. The complex exists as a monomer or a dimer and forms supercomplexes (SCs) in the inner mitochondrial membrane with ubiquinol-cytochrome c oxidoreductase (cytochrome b-c1 complex, complex III, CIII). Cu cation serves as cofactor.

The protein localises to the mitochondrion inner membrane. The enzyme catalyses 4 Fe(II)-[cytochrome c] + O2 + 8 H(+)(in) = 4 Fe(III)-[cytochrome c] + 2 H2O + 4 H(+)(out). Component of the cytochrome c oxidase, the last enzyme in the mitochondrial electron transport chain which drives oxidative phosphorylation. The respiratory chain contains 3 multisubunit complexes succinate dehydrogenase (complex II, CII), ubiquinol-cytochrome c oxidoreductase (cytochrome b-c1 complex, complex III, CIII) and cytochrome c oxidase (complex IV, CIV), that cooperate to transfer electrons derived from NADH and succinate to molecular oxygen, creating an electrochemical gradient over the inner membrane that drives transmembrane transport and the ATP synthase. Cytochrome c oxidase is the component of the respiratory chain that catalyzes the reduction of oxygen to water. Electrons originating from reduced cytochrome c in the intermembrane space (IMS) are transferred via the dinuclear copper A center (CU(A)) of subunit 2 and heme A of subunit 1 to the active site in subunit 1, a binuclear center (BNC) formed by heme A3 and copper B (CU(B)). The BNC reduces molecular oxygen to 2 water molecules using 4 electrons from cytochrome c in the IMS and 4 protons from the mitochondrial matrix. The protein is Cytochrome c oxidase subunit 2 (COII) of Aedes aegypti (Yellowfever mosquito).